The chain runs to 68 residues: Small ribosomal subunit protein bS21 (68 aa).

This sequence belongs to the bacterial ribosomal protein bS21 family.

In Cereibacter sphaeroides (strain ATCC 17029 / ATH 2.4.9) (Rhodobacter sphaeroides), this protein is Small ribosomal subunit protein bS21.